Here is a 168-residue protein sequence, read N- to C-terminus: Peptide deformylase 1 (168 aa).

Fe cation contacts are provided by Cys-91 and His-133. Residue Glu-134 is part of the active site. His-137 serves as a coordination point for Fe cation.

The protein belongs to the polypeptide deformylase family. The cofactor is Fe(2+).

It catalyses the reaction N-terminal N-formyl-L-methionyl-[peptide] + H2O = N-terminal L-methionyl-[peptide] + formate. Its function is as follows. Removes the formyl group from the N-terminal Met of newly synthesized proteins. Requires at least a dipeptide for an efficient rate of reaction. N-terminal L-methionine is a prerequisite for activity but the enzyme has broad specificity at other positions. The chain is Peptide deformylase 1 from Shewanella oneidensis (strain ATCC 700550 / JCM 31522 / CIP 106686 / LMG 19005 / NCIMB 14063 / MR-1).